The following is a 384-amino-acid chain: Probable L-tyrosine/L-aspartate decarboxylase (384 aa).

N6-(pyridoxal phosphate)lysine is present on Lys233.

Belongs to the group II decarboxylase family. MfnA subfamily. It depends on pyridoxal 5'-phosphate as a cofactor.

The catalysed reaction is L-tyrosine + H(+) = tyramine + CO2. It carries out the reaction L-aspartate + H(+) = beta-alanine + CO2. Its pathway is cofactor biosynthesis; methanofuran biosynthesis. The protein operates within cofactor biosynthesis; coenzyme A biosynthesis. Its function is as follows. Catalyzes the decarboxylation of L-tyrosine to produce tyramine for methanofuran biosynthesis. Can also catalyze the decarboxylation of L-aspartate to produce beta-alanine for coenzyme A (CoA) biosynthesis. The protein is Probable L-tyrosine/L-aspartate decarboxylase of Methanococcus maripaludis (strain DSM 14266 / JCM 13030 / NBRC 101832 / S2 / LL).